The chain runs to 205 residues: uncharacterized protein (205 aa).

This sequence belongs to the peptidase C56 family.

This is an uncharacterized protein from Methanocaldococcus jannaschii (strain ATCC 43067 / DSM 2661 / JAL-1 / JCM 10045 / NBRC 100440) (Methanococcus jannaschii).